Here is a 770-residue protein sequence, read N- to C-terminus: Mitochondrial 15S rRNA processing factor CCM1 (770 aa).

Residues 1-90 (MIRLILWNNV…RSFTKVIAQH (90 aa)) constitute a mitochondrion transit peptide. 2 disordered regions span residues 28 to 67 (NKRK…GSIA) and 90 to 114 (HLKP…LPPI). The span at 43 to 53 (NRKDGDIEPYR) shows a compositional bias: basic and acidic residues. Over residues 55–65 (TDQNQTPNTGS) the composition is skewed to polar residues. 5 PPR repeats span residues 276–310 (KIDH…NIEI), 311–346 (SKMI…SQKT), 349–383 (DEKV…GMNV), 384–419 (NQNL…GWVP), and 420–454 (NLQT…NSVT). Residues 588 to 598 (RQDEPTEKATT) show a composition bias toward basic and acidic residues. The segment at 588-610 (RQDEPTEKATTTEEQITSSEPDT) is disordered. Residues 599–610 (TEEQITSSEPDT) show a composition bias toward polar residues. One copy of the PPR 6 repeat lies at 636–666 (DSYLYNLAIKAAGKFKDYSFAQQILHERGQF).

Belongs to the CCM1 family. As to quaternary structure, binds to mitochondrial small subunit 15S rRNA.

The protein localises to the mitochondrion. Its function is as follows. Regulates mitochondrial small subunit maturation by controlling 15S rRNA 5'-end processing. Localizes to the 5' precursor of the 15S rRNA in a position that is subsequently occupied by mS47 in the mature yeast mtSSU. Uses structure and sequence-specific RNA recognition, binding to a single-stranded region of the precursor and specifically recognizing bases -6 to -1. The exchange of Ccm1 for mS47 is coupled to the irreversible removal of precursor rRNA that is accompanied by conformational changes of the mitoribosomal proteins uS5m and mS26. These conformational changes signal completion of 5'-end rRNA processing through protection of the mature 5'-end of the 15S rRNA and stabilization of mS47. The removal of the 5' precursor together with the dissociation of Ccm1 may be catalyzed by the 5'-3' exoribonuclease Pet127. Involved in the specific removal of group I introns in mitochondrial encoded transcripts. In Candida albicans (strain WO-1) (Yeast), this protein is Mitochondrial 15S rRNA processing factor CCM1 (CCM1).